Consider the following 384-residue polypeptide: Substance-K receptor (384 aa).

Residues 1–32 (MGAHASVTDTNILSGLESNATGVTAFSMPGWQ) are Extracellular-facing. Residue N19 is glycosylated (N-linked (GlcNAc...) asparagine). Residues 33–56 (LALWATAYLALVLVAVTGNATVIW) traverse the membrane as a helical segment. Residues 57 to 69 (IILAHERMRTVTN) are Cytoplasmic-facing. Residues 70–90 (YFIINLALADLCMAAFNATFN) traverse the membrane as a helical segment. Residues 91 to 107 (FIYASHNIWYFGSTFCY) are Extracellular-facing. C106 and C181 are oxidised to a cystine. The helical transmembrane segment at 108-129 (FQNLFPVTAMFVSIYSMTAIAA) threads the bilayer. Residues 130-149 (DRYMAIVHPFQPRLSAPSTK) are Cytoplasmic-facing. The helical transmembrane segment at 150–170 (AVIAVIWLVALALASPQCFYS) threads the bilayer. Topologically, residues 171–196 (TITVDQGATKCVVAWPNDNGGKMLLL) are extracellular. The helical transmembrane segment at 197–218 (YHLVVFVLIYFLPLVVMFAAYS) threads the bilayer. Topologically, residues 219-251 (VIGLTLWKRAVPRHQAHGANLRHLQAKKKFVKA) are cytoplasmic. A helical membrane pass occupies residues 252 to 272 (MVLVVVTFAICWLPYHLYFIL). Residues 273–290 (GTFQEDIYYRKFIQQVYL) lie on the Extracellular side of the membrane. A helical transmembrane segment spans residues 291–310 (ALFWLAMSSTMYNPIIYCCL). The Cytoplasmic segment spans residues 311–384 (NHRFRSGFRL…GPQDGEPAGP (74 aa)). A lipid anchor (S-palmitoyl cysteine) is attached at C324. The segment at 365 to 384 (HSEATNGQVGGPQDGEPAGP) is disordered.

This sequence belongs to the G-protein coupled receptor 1 family.

It localises to the cell membrane. Functionally, this is a receptor for the tachykinin neuropeptide substance K (neurokinin A). It is associated with G proteins that activate a phosphatidylinositol-calcium second messenger system. The rank order of affinity of this receptor to tachykinins is: substance K &gt; neuromedin-K &gt; substance P. This Mus musculus (Mouse) protein is Substance-K receptor (Tacr2).